The sequence spans 479 residues: Cobyric acid synthase (479 aa).

The 193-residue stretch at 250-442 (TRTVAVVAYP…LHGLFEDAAA (193 aa)) folds into the GATase cobBQ-type domain. The active-site Nucleophile is Cys-331. His-434 is an active-site residue.

This sequence belongs to the CobB/CobQ family. CobQ subfamily.

It participates in cofactor biosynthesis; adenosylcobalamin biosynthesis. In terms of biological role, catalyzes amidations at positions B, D, E, and G on adenosylcobyrinic A,C-diamide. NH(2) groups are provided by glutamine, and one molecule of ATP is hydrogenolyzed for each amidation. The sequence is that of Cobyric acid synthase from Variovorax paradoxus (strain S110).